We begin with the raw amino-acid sequence, 434 residues long: Enolase (434 aa).

Glutamine 166 lines the (2R)-2-phosphoglycerate pocket. Residue glutamate 208 is the Proton donor of the active site. Mg(2+) contacts are provided by aspartate 245, glutamate 290, and aspartate 317. (2R)-2-phosphoglycerate is bound by residues lysine 342, arginine 371, serine 372, and lysine 393. Catalysis depends on lysine 342, which acts as the Proton acceptor.

Belongs to the enolase family. Requires Mg(2+) as cofactor.

Its subcellular location is the cytoplasm. It localises to the secreted. The protein resides in the cell surface. It carries out the reaction (2R)-2-phosphoglycerate = phosphoenolpyruvate + H2O. It participates in carbohydrate degradation; glycolysis; pyruvate from D-glyceraldehyde 3-phosphate: step 4/5. Functionally, catalyzes the reversible conversion of 2-phosphoglycerate (2-PG) into phosphoenolpyruvate (PEP). It is essential for the degradation of carbohydrates via glycolysis. The polypeptide is Enolase (Caldicellulosiruptor saccharolyticus (strain ATCC 43494 / DSM 8903 / Tp8T 6331)).